The sequence spans 79 residues: Defensin 2 (79 aa).

An N-terminal signal peptide occupies residues 1–32; the sequence is VQKRTIIMEKKMAGFCIFFLILFLAQEYGVEG. Cystine bridges form between Cys-35/Cys-79, Cys-46/Cys-67, and Cys-52/Cys-73.

The protein belongs to the DEFL family. In terms of assembly, may form dimers. Not glycosylated. Post-translationally, has 4 disulfide bonds.

In terms of biological role, probably has antifungal activity. The chain is Defensin 2 from Arachis hypogaea (Peanut).